A 127-amino-acid chain; its full sequence is Protein ApaG (127 aa).

Positions 3–127 (DDPRYRVEVE…FVLSVPRTLH (125 aa)) constitute an ApaG domain.

The protein is Protein ApaG of Xanthomonas euvesicatoria pv. vesicatoria (strain 85-10) (Xanthomonas campestris pv. vesicatoria).